Reading from the N-terminus, the 259-residue chain is MAACRALKAVLVDLSGTLHIEDAAVPGAQEALKRLRGTSVIVRFVTNTTKESKQDLLERLRKLEFDISEDEIFTSLTAARSLLEQKQVRPMLLVDDRALPDFKGIQTTDPNAVVMGLAPEHFHYQILNQAFRLLLDGAPLIAIHKARYYKRKDGLALGPGPFVTALEYATDTKATVVGKPEKTFFLEALRGTGCEPEEAVMIGDDCRDDVGGAQDVGMLGILVKTGKYRASDEEKINPPPYLTCESFPHAVDHILQHLL.

Mg(2+) is bound by residues D13 and S15. Substrate is bound by residues 13–15 (DLS) and 46–47 (TN). The stretch at 47-71 (NTTKESKQDLLERLRKLEFDISEDE) forms a coiled coil. K50 carries the post-translational modification N6-succinyllysine. K179 contributes to the substrate binding site. D204 is a Mg(2+) binding site.

The protein belongs to the HAD-like hydrolase superfamily. It depends on Mg(2+) as a cofactor.

The protein is Haloacid dehalogenase-like hydrolase domain-containing protein 2 (HDHD2) of Pongo abelii (Sumatran orangutan).